The chain runs to 146 residues: Gene 19.2 protein (146 aa).

In Escherichia coli (Bacteriophage T3), this protein is Gene 19.2 protein (19.2).